We begin with the raw amino-acid sequence, 171 residues long: Ribosome maturation factor RimP (171 aa).

It belongs to the RimP family.

The protein resides in the cytoplasm. Functionally, required for maturation of 30S ribosomal subunits. This is Ribosome maturation factor RimP from Anaeromyxobacter sp. (strain Fw109-5).